The sequence spans 58 residues: Putative calcium channel toxin 196 (58 aa).

The signal sequence occupies residues glycine 1 to alanine 16. A propeptide spanning residues glutamate 17–glutamine 26 is cleaved from the precursor. Disulfide bonds link cysteine 25–cysteine 38, cysteine 31–cysteine 43, and cysteine 37–cysteine 52.

It belongs to the scorpion calcin-like family. KTX subfamily. In terms of tissue distribution, expressed by the venom gland.

It localises to the secreted. May inhibit voltage-gated potassium channels Kv1.1/KCNA1, hKv1.2/KCNA2, and Kv1.3/KCNA3. May also increase intracellular calcium release through the activation of nuclear inositol 1,4,5-trisphosphate receptors (ITPR) of cardiomyocytes, thereby causing an increase in the contraction frequency of these cells. The sequence is that of Putative calcium channel toxin 196 from Lychas mucronatus (Chinese swimming scorpion).